The following is a 402-amino-acid chain: Proline-rich protein 25 (402 aa).

Disordered stretches follow at residues 1 to 29, 109 to 255, and 337 to 371; these read MARTDQKPPCRGGCWGQPGHPNTGGAAAH, TVPG…MVGS, and EAAQDPATRRTAPPRRTASPEPPAPGAPLPACPGR. The segment covering 345–355 has biased composition (low complexity); the sequence is RRTAPPRRTAS. Residues 356 to 367 are compositionally biased toward pro residues; the sequence is PEPPAPGAPLPA.

The polypeptide is Proline-rich protein 25 (PRR25) (Homo sapiens (Human)).